Here is a 711-residue protein sequence, read N- to C-terminus: Polyribonucleotide nucleotidyltransferase (711 aa).

Positions 486 and 492 each coordinate Mg(2+). Residues 553-612 form the KH domain; sequence PRIHTIKINPDKIKDVIGKGGSVIRALTEETGTTIEIEDDGTVKIAATDGEKAKHAIRRI. The 69-residue stretch at 622–690 folds into the S1 motif domain; it reads GRVYTGKVTR…RQGRIRLSIK (69 aa). Positions 689-711 are disordered; it reads IKEATEQSQPAAAPEAPAAEQGE. Residues 694–711 show a composition bias toward low complexity; that stretch reads EQSQPAAAPEAPAAEQGE.

The protein belongs to the polyribonucleotide nucleotidyltransferase family. Component of the RNA degradosome, which is a multiprotein complex involved in RNA processing and mRNA degradation. Requires Mg(2+) as cofactor.

It localises to the cytoplasm. The enzyme catalyses RNA(n+1) + phosphate = RNA(n) + a ribonucleoside 5'-diphosphate. In terms of biological role, involved in mRNA degradation. Catalyzes the phosphorolysis of single-stranded polyribonucleotides processively in the 3'- to 5'-direction. The polypeptide is Polyribonucleotide nucleotidyltransferase (Shigella flexneri serotype 5b (strain 8401)).